The primary structure comprises 540 residues: 2,3-bisphosphoglycerate-independent phosphoglycerate mutase (540 aa).

The Mn(2+) site is built by Asp-24 and Ser-74. Ser-74 (phosphoserine intermediate) is an active-site residue. Substrate contacts are provided by residues His-135, 165 to 166 (RD), Arg-197, Arg-203, 268 to 271 (RPDR), and Lys-341. Asp-408, His-412, Asp-449, His-450, and His-467 together coordinate Mn(2+).

This sequence belongs to the BPG-independent phosphoglycerate mutase family. In terms of assembly, monomer. It depends on Mn(2+) as a cofactor.

It catalyses the reaction (2R)-2-phosphoglycerate = (2R)-3-phosphoglycerate. It participates in carbohydrate degradation; glycolysis; pyruvate from D-glyceraldehyde 3-phosphate: step 3/5. Functionally, catalyzes the interconversion of 2-phosphoglycerate and 3-phosphoglycerate. The sequence is that of 2,3-bisphosphoglycerate-independent phosphoglycerate mutase from Prochlorococcus marinus (strain SARG / CCMP1375 / SS120).